The chain runs to 506 residues: Maturase K (506 aa).

It belongs to the intron maturase 2 family. MatK subfamily.

It is found in the plastid. It localises to the chloroplast. Its function is as follows. Usually encoded in the trnK tRNA gene intron. Probably assists in splicing its own and other chloroplast group II introns. The chain is Maturase K from Trifolium spumosum (Mediterranean clover).